The primary structure comprises 88 residues: Small ribosomal subunit protein uS15 (88 aa).

Belongs to the universal ribosomal protein uS15 family. In terms of assembly, part of the 30S ribosomal subunit. Forms a bridge to the 50S subunit in the 70S ribosome, contacting the 23S rRNA.

Its function is as follows. One of the primary rRNA binding proteins, it binds directly to 16S rRNA where it helps nucleate assembly of the platform of the 30S subunit by binding and bridging several RNA helices of the 16S rRNA. In terms of biological role, forms an intersubunit bridge (bridge B4) with the 23S rRNA of the 50S subunit in the ribosome. The polypeptide is Small ribosomal subunit protein uS15 (Borrelia garinii subsp. bavariensis (strain ATCC BAA-2496 / DSM 23469 / PBi) (Borreliella bavariensis)).